A 30-amino-acid polypeptide reads, in one-letter code: Poly-His-poly-Gly peptide 2 (30 aa).

The segment covering 1–18 (EDDHDHHHHHHHHHHHHG) has biased composition (basic residues). Residues 1 to 30 (EDDHDHHHHHHHHHHHHGVGGGGGGGGGGA) form a disordered region. The segment covering 19-30 (VGGGGGGGGGGA) has biased composition (gly residues).

As to expression, expressed by the venom gland.

It localises to the secreted. Its function is as follows. May serve as a metalloproteinase inhibitor during glandular storage. Their inhibition may be instantly disengaged, by dilution or physiochemical change, when venom is injected into tissue of the victim. This Atheris nitschei (Great lakes bush viper) protein is Poly-His-poly-Gly peptide 2.